Consider the following 1040-residue polypeptide: MQVLPPSSTGGPSRLFIMRPVATTLLMVAILLAGIIGYRALPVSALPEVDYPTIQVVTLYPGASPDVMTSAVTAPLERQFGQMSGLKQMSSQSSGGASVITLQFQLTLPLDVAEQEVQAAINAATNLLPSDLPNPPVYSKVNPADPPIMTLAVTSTAMPMTQVEDMVETRVAQKISQISGVGLVTLSGGQRPAVRVKLNAQAIAALGLTSETVRTAITGANVNSAKGSLDGPSRAVTLSANDQMQSAEEYRQLIIAYQNGAPIRLGDVATVEQGAENSWLGAWANKEQAIVMNVQRQPGANIISTADSIRQMLPQLTESLPKSVKVTVLSDRTTNIRASVNDTQFELMMAIALVVMIIYLFLRNIPATIIPGVAVPLSLIGTFAVMVFLDFSINNLTLMALTIATGFVVDDAIVVIENISRYIEKGEKPLAAALKGAGEIGFTIISLTFSLIAVLIPLLFMGDIVGRLFREFAITLAVAILISAVVSLTLTPMMCARMLSQESLRKQNRFSRASEKMFDRIIAAYGRGLAKVLNHPWLTLSVALSTLLLSVLLWVFIPKGFFPVQDNGIIQGTLQAPQSSSFANMAQRQRQVADVILQDPAVQSLTSFVGVDGTNPSLNSARLQINLKPLDERDDRVQKVIARLQTAVDKVPGVDLFLQPTQDLTIDTQVSRTQYQFTLQATSLDALSTWVPQLVEKLQQLPQLSDVSSDWQDQGLVAYVNVDRDSASRLGISMADVDNALYNAFGQRLISTIYTQANQYRVVLEHNTENTPGLAALDTIRLTSSDGGVVPLSSIAKIEQRFAPLSINHLDQFPVTTISFNMPDNYSLGDAVQAIMDTEKTLNLPVDITTQFQGSTLAFQSALGSTVWLIVAAVVAMYIVLGILYESFIHPITILSTLPTAGVGALLALLIAGSELDVIAIIGIILLIGIVKKNAIMMIDFALAAEREQGMSPRDAIYQACLLRFRPILMTTLAALLGALPLMLSTGVGAELRRPLGIGMVGGLVVSQVLTLFTTPVIYLLFDRLALWTKSRFARHEEEA.

12 helical membrane-spanning segments follow: residues 16–36, 347–367, 369–389, 396–416, 440–460, 472–492, 537–557, 863–883, 888–908, 911–931, 968–988, and 998–1018; these read FIMR…AGII, LMMA…NIPA, IIPG…MVFL, LTLM…IVVI, IGFT…PLLF, FAIT…TLTP, WLTL…WVFI, LGST…VLGI, FIHP…ALLA, IAGS…IGIV, ILMT…STGV, and IGMV…TPVI.

Belongs to the resistance-nodulation-cell division (RND) (TC 2.A.6) family. MdtB subfamily. In terms of assembly, part of a tripartite efflux system composed of MdtA, MdtB and MdtC. MdtB forms a heteromultimer with MdtC.

The protein localises to the cell inner membrane. Its function is as follows. The MdtABC tripartite complex confers resistance against novobiocin and deoxycholate. This is Multidrug resistance protein MdtB from Escherichia fergusonii (strain ATCC 35469 / DSM 13698 / CCUG 18766 / IAM 14443 / JCM 21226 / LMG 7866 / NBRC 102419 / NCTC 12128 / CDC 0568-73).